Consider the following 374-residue polypeptide: Alanine racemase (374 aa).

Lysine 35 serves as the catalytic Proton acceptor; specific for D-alanine. Lysine 35 bears the N6-(pyridoxal phosphate)lysine mark. Arginine 133 contacts substrate. Tyrosine 264 (proton acceptor; specific for L-alanine) is an active-site residue. Methionine 312 lines the substrate pocket.

Belongs to the alanine racemase family. Pyridoxal 5'-phosphate serves as cofactor.

It carries out the reaction L-alanine = D-alanine. It participates in amino-acid biosynthesis; D-alanine biosynthesis; D-alanine from L-alanine: step 1/1. Its function is as follows. Catalyzes the interconversion of L-alanine and D-alanine. May also act on other amino acids. In Thermobifida fusca (strain YX), this protein is Alanine racemase (alr).